The primary structure comprises 277 residues: Undecaprenyl-diphosphatase (277 aa).

Transmembrane regions (helical) follow at residues 47–67, 85–105, 108–128, 183–203, 218–238, and 249–269; these read FNII…RGKI, VNLL…ADLI, WLFN…IMLW, AATE…AVYS, VFAV…RALL, and FAWY…FHLI.

Belongs to the UppP family.

Its subcellular location is the cell inner membrane. The catalysed reaction is di-trans,octa-cis-undecaprenyl diphosphate + H2O = di-trans,octa-cis-undecaprenyl phosphate + phosphate + H(+). Catalyzes the dephosphorylation of undecaprenyl diphosphate (UPP). Confers resistance to bacitracin. This chain is Undecaprenyl-diphosphatase, found in Pseudomonas paraeruginosa (strain DSM 24068 / PA7) (Pseudomonas aeruginosa (strain PA7)).